The primary structure comprises 229 residues: Trehalose-6-phosphate phosphatase-related protein (229 aa).

The active-site Nucleophile is the Asp-5. Mg(2+) is bound by residues Asp-5, Asp-7, and Asp-177. Substrate is bound at residue 5 to 7; the sequence is DYD.

It belongs to the trehalose phosphatase family. The cofactor is Mg(2+).

It catalyses the reaction alpha,alpha-trehalose 6-phosphate + H2O = alpha,alpha-trehalose + phosphate. The protein operates within glycan biosynthesis; trehalose biosynthesis. Functionally, removes the phosphate from trehalose 6-phosphate (Tre6P) to produce free trehalose. Also catalyzes the dephosphorylation of para-nitrophenyl phosphate (pNPP), but with lesser efficiency (in vitro). The chain is Trehalose-6-phosphate phosphatase-related protein from Thermoplasma acidophilum (strain ATCC 25905 / DSM 1728 / JCM 9062 / NBRC 15155 / AMRC-C165).